The sequence spans 649 residues: FAS-associated factor 1 (649 aa).

Residues 1–57 enclose the UBA domain; sequence MASNMDREMILADFQACTGIENIDEAITLLEQNNWDLVAAINGVIPQENGILQSDFG. 2 disordered regions span residues 56–84 and 266–290; these read FGGE…SAFR and RRTS…VSDS. The segment covering 68-82 has biased composition (low complexity); it reads PASHPAPASTPSSSA. At Ser-319 the chain carries Phosphoserine. Positions 568-645 constitute a UBX domain; it reads NAEPVSKLRI…NLFPQETLFL (78 aa). Position 579 is a phosphothreonine (Thr-579). Ser-581 is modified (phosphoserine).

As to quaternary structure, interacts with CDT1 and ATPase VCP/p97. Interacts (via UBA domain) with FAS (via death domain). Interacts (via UBA domain) with NLRP12 (via DAPIN/PYRIN domain).

The protein localises to the nucleus. Its function is as follows. Ubiquitin-binding protein. Required for the progression of DNA replication forks by targeting DNA replication licensing factor CDT1 for degradation. Potentiates but cannot initiate FAS-induced apoptosis. This Mus musculus (Mouse) protein is FAS-associated factor 1 (Faf1).